Here is a 35-residue protein sequence, read N- to C-terminus: Photosystem II reaction center protein T (35 aa).

A helical transmembrane segment spans residues 3 to 23; the sequence is ALVYTFLLVSTLGIIFFAIFF.

It belongs to the PsbT family. PSII is composed of 1 copy each of membrane proteins PsbA, PsbB, PsbC, PsbD, PsbE, PsbF, PsbH, PsbI, PsbJ, PsbK, PsbL, PsbM, PsbT, PsbY, PsbZ, Psb30/Ycf12, at least 3 peripheral proteins of the oxygen-evolving complex and a large number of cofactors. It forms dimeric complexes.

The protein resides in the plastid. It is found in the chloroplast thylakoid membrane. Functionally, found at the monomer-monomer interface of the photosystem II (PS II) dimer, plays a role in assembly and dimerization of PSII. PSII is a light-driven water plastoquinone oxidoreductase, using light energy to abstract electrons from H(2)O, generating a proton gradient subsequently used for ATP formation. This Pisum sativum (Garden pea) protein is Photosystem II reaction center protein T.